Consider the following 262-residue polypeptide: Polyamine aminopropyltransferase (262 aa).

A PABS domain is found at 1–249; sequence MWITQEITPY…DIHRAAFALP (249 aa). Asn-29 lines the S-methyl-5'-thioadenosine pocket. Residue Asp-83 participates in spermidine binding. The active-site Proton acceptor is the Asp-155.

Belongs to the spermidine/spermine synthase family. Homodimer or homotetramer.

It is found in the cytoplasm. The enzyme catalyses S-adenosyl 3-(methylsulfanyl)propylamine + putrescine = S-methyl-5'-thioadenosine + spermidine + H(+). It functions in the pathway amine and polyamine biosynthesis; spermidine biosynthesis; spermidine from putrescine: step 1/1. Its function is as follows. Catalyzes the irreversible transfer of a propylamine group from the amino donor S-adenosylmethioninamine (decarboxy-AdoMet) to putrescine (1,4-diaminobutane) to yield spermidine. This Helicobacter pylori (strain P12) protein is Polyamine aminopropyltransferase.